The following is a 240-amino-acid chain: Protein unc-119 homolog A (240 aa).

Residues 1 to 12 (MKVKKGGGGAGT) show a composition bias toward gly residues. Positions 1–61 (MKVKKGGGGA…GPLQRKQRIG (61 aa)) are disordered. Over residues 13–23 (GAEPASGAPGP) the composition is skewed to low complexity. Residues serine 37, serine 39, and serine 41 each carry the phosphoserine; by CK2 modification. Tyrosine 131 lines the tetradecanoate pocket.

The protein belongs to the PDE6D/unc-119 family. Interacts with CABP4; in the absence of calcium. May interact with GTP-bound ARL1. Interacts with ARL2 and ARL3 (GTP-bound forms); this promotes the release of myristoylated cargo proteins. Found in a complex with ARL3, RP2 and UNC119; RP2 induces hydrolysis of GTP ARL3 in the complex, leading to the release of UNC119. Interacts with NPHP3 (when myristoylated). Interacts with CYS1 (when myristoylated). Interacts with MACIR; interaction only takes place when UNC119 is not liganded with myristoylated proteins. Interacts with LCK; this interaction plays a crucial role in activation of LCK. Interacts with FYN. Interacts with RAB11A; in a cell cycle-dependent manner. Interacts with LYN (via SH2 and SH3 domains); leading to LYN activation. Interacts with DNM1; leading to a decrease of DNM1 GTPase activity. Found in a complex with ABL1, ABL2, CRK and UNC119; leading to the inhibition of CRK phosphorylation by ABL kinases. Interacts with CD44. Interacts with KLHL18 (via kelch repeats). Interacts with PPP3CA, PPP3CB and PPP3CC. Interacts with USP48; this interaction promotes UNC119 stability. Post-translationally, phosphorylation suppresses its interaction with KLHL18 and down-regulates its KLHL18-mediated degradation. Phosphorylated more under light conditions than dark conditions. Dephosphorylated by calcineurin.

It localises to the cytoplasm. Its subcellular location is the cytoskeleton. The protein localises to the microtubule organizing center. The protein resides in the centrosome. It is found in the spindle. It localises to the spindle pole. Involved in synaptic functions in photoreceptor cells, the signal transduction in immune cells as a Src family kinase activator, endosome recycling, the uptake of bacteria and endocytosis, protein trafficking in sensory neurons and as lipid-binding chaperone with specificity for a diverse subset of myristoylated proteins. Specifically binds the myristoyl moiety of a subset of N-terminally myristoylated proteins and is required for their localization. Binds myristoylated GNAT1 and is required for G-protein localization and trafficking in sensory neurons. Probably plays a role in trafficking proteins in photoreceptor cells. Plays important roles in mediating Src family kinase signals for the completion of cytokinesis via RAB11A. The chain is Protein unc-119 homolog A (UNC119) from Canis lupus familiaris (Dog).